Reading from the N-terminus, the 242-residue chain is Tryptophan synthase alpha chain (242 aa).

Catalysis depends on proton acceptor residues E31 and D42.

It belongs to the TrpA family. In terms of assembly, tetramer of two alpha and two beta chains.

The enzyme catalyses (1S,2R)-1-C-(indol-3-yl)glycerol 3-phosphate + L-serine = D-glyceraldehyde 3-phosphate + L-tryptophan + H2O. The protein operates within amino-acid biosynthesis; L-tryptophan biosynthesis; L-tryptophan from chorismate: step 5/5. Its function is as follows. The alpha subunit is responsible for the aldol cleavage of indoleglycerol phosphate to indole and glyceraldehyde 3-phosphate. The chain is Tryptophan synthase alpha chain from Staphylococcus aureus (strain MRSA252).